Reading from the N-terminus, the 124-residue chain is Small ribosomal subunit protein uS12c (124 aa).

Disordered stretches follow at residues 1–28 and 104–124; these read MPTI…KSCP and AAGV…KPKS. Basic residues-rich tracts occupy residues 11-20 and 109-124; these read ERRKINKKTK and DRRK…KPKS.

It belongs to the universal ribosomal protein uS12 family. As to quaternary structure, part of the 30S ribosomal subunit.

The protein resides in the plastid. It is found in the chloroplast. Functionally, with S4 and S5 plays an important role in translational accuracy. Located at the interface of the 30S and 50S subunits. This Porphyra purpurea (Red seaweed) protein is Small ribosomal subunit protein uS12c (rps12).